Consider the following 469-residue polypeptide: UDP-N-acetylmuramate--L-alanine ligase (469 aa).

122–128 (GTHGKTT) is an ATP binding site.

The protein belongs to the MurCDEF family.

The protein localises to the cytoplasm. It catalyses the reaction UDP-N-acetyl-alpha-D-muramate + L-alanine + ATP = UDP-N-acetyl-alpha-D-muramoyl-L-alanine + ADP + phosphate + H(+). Its pathway is cell wall biogenesis; peptidoglycan biosynthesis. Functionally, cell wall formation. The protein is UDP-N-acetylmuramate--L-alanine ligase of Legionella pneumophila subsp. pneumophila (strain Philadelphia 1 / ATCC 33152 / DSM 7513).